Reading from the N-terminus, the 275-residue chain is 3-methyl-2-oxobutanoate hydroxymethyltransferase (275 aa).

Mg(2+) is bound by residues Asp44 and Asp83. Residues 44-45, Asp83, and Lys113 contribute to the 3-methyl-2-oxobutanoate site; that span reads DS. Residue Glu115 coordinates Mg(2+). The active-site Proton acceptor is the Glu182.

The protein belongs to the PanB family. In terms of assembly, homodecamer; pentamer of dimers. Mg(2+) serves as cofactor.

It localises to the cytoplasm. The catalysed reaction is 3-methyl-2-oxobutanoate + (6R)-5,10-methylene-5,6,7,8-tetrahydrofolate + H2O = 2-dehydropantoate + (6S)-5,6,7,8-tetrahydrofolate. Its pathway is cofactor biosynthesis; (R)-pantothenate biosynthesis; (R)-pantoate from 3-methyl-2-oxobutanoate: step 1/2. In terms of biological role, catalyzes the reversible reaction in which hydroxymethyl group from 5,10-methylenetetrahydrofolate is transferred onto alpha-ketoisovalerate to form ketopantoate. The sequence is that of 3-methyl-2-oxobutanoate hydroxymethyltransferase from Clostridium beijerinckii (strain ATCC 51743 / NCIMB 8052) (Clostridium acetobutylicum).